A 331-amino-acid polypeptide reads, in one-letter code: Endo-1,4-beta-xylanase 2 (331 aa).

An N-terminal signal peptide occupies residues 1-17; the sequence is MKASSVLLGLAPLAALA. The GH10 domain occupies 31–329; it reads QQSIDALMKA…KPAYNSVVQA (299 aa). A glycan (N-linked (GlcNAc...) asparagine) is linked at N105. E159 serves as the catalytic Proton donor. E266 acts as the Nucleophile in catalysis. C284 and C290 are disulfide-bonded. An N-linked (GlcNAc...) asparagine glycan is attached at N301.

Belongs to the glycosyl hydrolase 10 (cellulase F) family.

Its subcellular location is the secreted. The catalysed reaction is Endohydrolysis of (1-&gt;4)-beta-D-xylosidic linkages in xylans.. It participates in glycan degradation; xylan degradation. Endo-1,4-beta-xylanase involved in the hydrolysis of xylan, a major structural heterogeneous polysaccharide found in plant biomass representing the second most abundant polysaccharide in the biosphere, after cellulose. Accounts for approximately 70 percent of the endoxylanase activity in the culture filtrate. The polypeptide is Endo-1,4-beta-xylanase 2 (XYL2) (Pyricularia grisea (Crabgrass-specific blast fungus)).